Reading from the N-terminus, the 453-residue chain is Growth/differentiation factor 9 (453 aa).

The N-terminal stretch at 1-27 is a signal peptide; it reads MALPNKFFLWFCCFAWLCFPISLDSLP. The propeptide occupies 28 to 318; it reads SRGEAQIVAR…EGVRSSRHRR (291 aa). N-linked (GlcNAc...) asparagine glycosylation is found at Asn163, Asn236, Asn255, and Asn269. Positions 304–328 are disordered; that stretch reads GEEAAEGVRSSRHRRDQESASSELK. Over residues 318 to 328 the composition is skewed to basic and acidic residues; that stretch reads RDQESASSELK. A glycan (N-linked (GlcNAc...) asparagine) is linked at Asn337. 3 disulfides stabilise this stretch: Cys352/Cys418, Cys381/Cys450, and Cys385/Cys452.

The protein belongs to the TGF-beta family. As to quaternary structure, homodimer or heterodimer (Potential). But, in contrast to other members of this family, cannot be disulfide-linked. Post-translationally, phosphorylated; phosphorylation is critical for GDF9 function.

Its subcellular location is the secreted. Its function is as follows. Required for ovarian folliculogenesis. The polypeptide is Growth/differentiation factor 9 (GDF9) (Ovis aries (Sheep)).